The sequence spans 155 residues: SsrA-binding protein (155 aa).

The disordered stretch occupies residues 136–155 (REDLKRRQDQRDIQRAMKSY).

It belongs to the SmpB family.

It is found in the cytoplasm. In terms of biological role, required for rescue of stalled ribosomes mediated by trans-translation. Binds to transfer-messenger RNA (tmRNA), required for stable association of tmRNA with ribosomes. tmRNA and SmpB together mimic tRNA shape, replacing the anticodon stem-loop with SmpB. tmRNA is encoded by the ssrA gene; the 2 termini fold to resemble tRNA(Ala) and it encodes a 'tag peptide', a short internal open reading frame. During trans-translation Ala-aminoacylated tmRNA acts like a tRNA, entering the A-site of stalled ribosomes, displacing the stalled mRNA. The ribosome then switches to translate the ORF on the tmRNA; the nascent peptide is terminated with the 'tag peptide' encoded by the tmRNA and targeted for degradation. The ribosome is freed to recommence translation, which seems to be the essential function of trans-translation. The sequence is that of SsrA-binding protein from Nostoc punctiforme (strain ATCC 29133 / PCC 73102).